The primary structure comprises 549 residues: Probable protein kinase UbiB (549 aa).

A Protein kinase domain is found at 123–501 (DFNETPLASA…QQQAHKSNYL (379 aa)). Residues 129–137 (LASASISQV) and K152 contribute to the ATP site. The active-site Proton acceptor is the D287. 2 helical membrane-spanning segments follow: residues 498–518 (SNYLLITSAILLICGTLLFNQ) and 520–540 (ATLWSPYVCLISGAALWIIGW).

It belongs to the ABC1 family. UbiB subfamily.

It localises to the cell inner membrane. It participates in cofactor biosynthesis; ubiquinone biosynthesis [regulation]. In terms of biological role, is probably a protein kinase regulator of UbiI activity which is involved in aerobic coenzyme Q (ubiquinone) biosynthesis. This is Probable protein kinase UbiB from Shewanella sp. (strain MR-7).